A 235-amino-acid polypeptide reads, in one-letter code: Small ribosomal subunit protein uS3 (235 aa).

The KH type-2 domain maps to V39 to K107.

The protein belongs to the universal ribosomal protein uS3 family. In terms of assembly, part of the 30S ribosomal subunit. Forms a tight complex with proteins S10 and S14.

Functionally, binds the lower part of the 30S subunit head. Binds mRNA in the 70S ribosome, positioning it for translation. This Actinobacillus pleuropneumoniae serotype 5b (strain L20) protein is Small ribosomal subunit protein uS3.